A 142-amino-acid chain; its full sequence is Small ribosomal subunit protein uS12 (142 aa).

The protein belongs to the universal ribosomal protein uS12 family. As to quaternary structure, part of the 30S ribosomal subunit.

Its function is as follows. With S4 and S5 plays an important role in translational accuracy. Located at the interface of the 30S and 50S subunits. This is Small ribosomal subunit protein uS12 from Methanosarcina barkeri (strain Fusaro / DSM 804).